The primary structure comprises 97 residues: Citrate lyase acyl carrier protein (97 aa).

Residue Ser14 is modified to O-(phosphoribosyl dephospho-coenzyme A)serine.

Belongs to the CitD family. As to quaternary structure, oligomer with a subunit composition of (alpha,beta,gamma)6.

Its subcellular location is the cytoplasm. Functionally, covalent carrier of the coenzyme of citrate lyase. This is Citrate lyase acyl carrier protein from Leuconostoc citreum (strain KM20).